Here is a 362-residue protein sequence, read N- to C-terminus: MKASIRVKLETLVERYEEVQHLLGDPGVIGDQNKFRALSREYSQLEEVTQCFQAYEKVQEDLVAAQEMAQEDDAEMREMAQDEIKEAKEASERLTDELQVLLIPKDPNDERNCFLEIRAGAGGDEAGIFAGNLFRMYSRFAEKKGWRIEVMSSHASEQGGFKEMIAKVSGDGAYGILKFESGGHRVQRVPETESQGRVHTSACTIAVMAEIPEADLPEIKSSDLKIDTFRSSGAGGQHVNTTDSAIRITHLPTGTVVECQDERSQHKNKAKAMSVLAARIIQAEEARRAAVVSDTRRNLLGSGDRSDRIRTYNYPQSRVSDHRINLTIYRLNEVMEGDLAALIEPVVLEYQADQLAALAEQN.

N5-methylglutamine is present on Gln-237.

This sequence belongs to the prokaryotic/mitochondrial release factor family. Post-translationally, methylated by PrmC. Methylation increases the termination efficiency of RF1.

The protein resides in the cytoplasm. Peptide chain release factor 1 directs the termination of translation in response to the peptide chain termination codons UAG and UAA. This Aliivibrio salmonicida (strain LFI1238) (Vibrio salmonicida (strain LFI1238)) protein is Peptide chain release factor 1.